A 226-amino-acid polypeptide reads, in one-letter code: Uracil-DNA glycosylase (226 aa).

Asp64 functions as the Proton acceptor in the catalytic mechanism.

The protein belongs to the uracil-DNA glycosylase (UDG) superfamily. UNG family.

Its subcellular location is the cytoplasm. The enzyme catalyses Hydrolyzes single-stranded DNA or mismatched double-stranded DNA and polynucleotides, releasing free uracil.. Its function is as follows. Excises uracil residues from the DNA which can arise as a result of misincorporation of dUMP residues by DNA polymerase or due to deamination of cytosine. In Photorhabdus laumondii subsp. laumondii (strain DSM 15139 / CIP 105565 / TT01) (Photorhabdus luminescens subsp. laumondii), this protein is Uracil-DNA glycosylase.